The chain runs to 388 residues: Putative 8-amino-7-oxononanoate synthase (388 aa).

Arg-18 contacts substrate. 105–106 (GY) is a binding site for pyridoxal 5'-phosphate. A substrate-binding site is contributed by His-130. Pyridoxal 5'-phosphate-binding positions include Ser-176, 201–204 (DDAH), and 232–235 (TLSK). Lys-235 bears the N6-(pyridoxal phosphate)lysine mark. Thr-349 serves as a coordination point for substrate.

The protein belongs to the class-II pyridoxal-phosphate-dependent aminotransferase family. BioF subfamily. In terms of assembly, homodimer. Pyridoxal 5'-phosphate is required as a cofactor.

The enzyme catalyses 6-carboxyhexanoyl-[ACP] + L-alanine + H(+) = (8S)-8-amino-7-oxononanoate + holo-[ACP] + CO2. Its pathway is cofactor biosynthesis; biotin biosynthesis. Functionally, catalyzes the decarboxylative condensation of pimeloyl-[acyl-carrier protein] and L-alanine to produce 8-amino-7-oxononanoate (AON), [acyl-carrier protein], and carbon dioxide. This Acetivibrio thermocellus (strain ATCC 27405 / DSM 1237 / JCM 9322 / NBRC 103400 / NCIMB 10682 / NRRL B-4536 / VPI 7372) (Clostridium thermocellum) protein is Putative 8-amino-7-oxononanoate synthase (bioF).